A 397-amino-acid chain; its full sequence is Phosphoglycerate kinase (397 aa).

Substrate-binding positions include 21 to 23 (DVN), Arg-36, 59 to 62 (HFGR), Arg-119, and Arg-152. ATP-binding positions include Lys-202, Glu-324, and 354-357 (GGDT).

Belongs to the phosphoglycerate kinase family. As to quaternary structure, monomer.

The protein resides in the cytoplasm. It catalyses the reaction (2R)-3-phosphoglycerate + ATP = (2R)-3-phospho-glyceroyl phosphate + ADP. The protein operates within carbohydrate degradation; glycolysis; pyruvate from D-glyceraldehyde 3-phosphate: step 2/5. This is Phosphoglycerate kinase from Cereibacter sphaeroides (strain KD131 / KCTC 12085) (Rhodobacter sphaeroides).